We begin with the raw amino-acid sequence, 369 residues long: Peptide chain release factor 2 (369 aa).

Residue Gln-249 is modified to N5-methylglutamine.

It belongs to the prokaryotic/mitochondrial release factor family. In terms of processing, methylated by PrmC. Methylation increases the termination efficiency of RF2.

The protein localises to the cytoplasm. Peptide chain release factor 2 directs the termination of translation in response to the peptide chain termination codons UGA and UAA. The polypeptide is Peptide chain release factor 2 (Thermosipho africanus (strain TCF52B)).